A 476-amino-acid chain; its full sequence is Sulfate adenylyltransferase subunit 1 (476 aa).

The 216-residue stretch at 24-239 (KSMLRFLTCG…VLENVDIDQK (216 aa)) folds into the tr-type G domain. Residues 33 to 40 (GSVDDGKS) are G1. Residue 33–40 (GSVDDGKS) coordinates GTP. Positions 91–95 (GITID) are G2. Residues 112–115 (DTPG) are G3. GTP-binding positions include 112–116 (DTPGH) and 167–170 (NKMD). The interval 167–170 (NKMD) is G4. The tract at residues 205-207 (SAL) is G5.

Belongs to the TRAFAC class translation factor GTPase superfamily. Classic translation factor GTPase family. CysN/NodQ subfamily. Heterodimer composed of CysD, the smaller subunit, and CysN.

It carries out the reaction sulfate + ATP + H(+) = adenosine 5'-phosphosulfate + diphosphate. Its pathway is sulfur metabolism; hydrogen sulfide biosynthesis; sulfite from sulfate: step 1/3. With CysD forms the ATP sulfurylase (ATPS) that catalyzes the adenylation of sulfate producing adenosine 5'-phosphosulfate (APS) and diphosphate, the first enzymatic step in sulfur assimilation pathway. APS synthesis involves the formation of a high-energy phosphoric-sulfuric acid anhydride bond driven by GTP hydrolysis by CysN coupled to ATP hydrolysis by CysD. The protein is Sulfate adenylyltransferase subunit 1 of Vibrio atlanticus (strain LGP32) (Vibrio splendidus (strain Mel32)).